Here is a 114-residue protein sequence, read N- to C-terminus: uncharacterized protein (114 aa).

2 consecutive transmembrane segments (helical) span residues 58-78 (CLLG…FFLL) and 94-114 (SISY…FCLA).

The protein localises to the membrane. This is an uncharacterized protein from Saccharomyces cerevisiae (strain ATCC 204508 / S288c) (Baker's yeast).